The following is a 349-amino-acid chain: 4-hydroxy-2-oxovalerate aldolase 1 (349 aa).

Residues I9 to Q261 enclose the Pyruvate carboxyltransferase domain. R17–D18 lines the substrate pocket. D18 is a Mn(2+) binding site. H21 acts as the Proton acceptor in catalysis. Substrate is bound by residues S171 and H200. 2 residues coordinate Mn(2+): H200 and H202. Y291 is a binding site for substrate.

The protein belongs to the 4-hydroxy-2-oxovalerate aldolase family.

It catalyses the reaction (S)-4-hydroxy-2-oxopentanoate = acetaldehyde + pyruvate. This Methylibium petroleiphilum (strain ATCC BAA-1232 / LMG 22953 / PM1) protein is 4-hydroxy-2-oxovalerate aldolase 1.